The following is a 163-amino-acid chain: Bacterial microcompartment assembly protein PduM (163 aa).

The protein belongs to the PduM family. As to quaternary structure, interacts with shell protein PduK.

The protein resides in the bacterial microcompartment. Its pathway is polyol metabolism; 1,2-propanediol degradation. Plays an essential role in assembly and/or stability of the bacterial microcompartment (BMC) dedicated to 1,2-propanediol (1,2-PD) degradation. Overexpression impairs BMC formation. Functionally, the 1,2-PD-specific bacterial microcompartment (BMC) concentrates low levels of 1,2-PD catabolic enzymes, concentrates volatile reaction intermediates thus enhancing pathway flux and keeps the level of toxic, mutagenic propionaldehyde low. This Salmonella typhimurium (strain LT2 / SGSC1412 / ATCC 700720) protein is Bacterial microcompartment assembly protein PduM.